The sequence spans 348 residues: Holliday junction branch migration complex subunit RuvB (348 aa).

The interval 4-198 (TTDYGASNTG…FGFTAHLDFY (195 aa)) is large ATPase domain (RuvB-L). ATP-binding positions include Leu37, Arg38, Gly79, Lys82, Thr83, Thr84, 145–147 (EDF), Arg188, Tyr198, and Arg235. Thr83 is a binding site for Mg(2+). A small ATPAse domain (RuvB-S) region spans residues 199 to 269 (PHEELEKLIE…DVKEALALYQ (71 aa)). Positions 272-348 (SEGLDRLDIA…DIIFGNYAQR (77 aa)) are head domain (RuvB-H). Residues Arg327 and Arg332 each contribute to the DNA site.

The protein belongs to the RuvB family. In terms of assembly, homohexamer. Forms an RuvA(8)-RuvB(12)-Holliday junction (HJ) complex. HJ DNA is sandwiched between 2 RuvA tetramers; dsDNA enters through RuvA and exits via RuvB. An RuvB hexamer assembles on each DNA strand where it exits the tetramer. Each RuvB hexamer is contacted by two RuvA subunits (via domain III) on 2 adjacent RuvB subunits; this complex drives branch migration. In the full resolvosome a probable DNA-RuvA(4)-RuvB(12)-RuvC(2) complex forms which resolves the HJ.

The protein localises to the cytoplasm. The catalysed reaction is ATP + H2O = ADP + phosphate + H(+). In terms of biological role, the RuvA-RuvB-RuvC complex processes Holliday junction (HJ) DNA during genetic recombination and DNA repair, while the RuvA-RuvB complex plays an important role in the rescue of blocked DNA replication forks via replication fork reversal (RFR). RuvA specifically binds to HJ cruciform DNA, conferring on it an open structure. The RuvB hexamer acts as an ATP-dependent pump, pulling dsDNA into and through the RuvAB complex. RuvB forms 2 homohexamers on either side of HJ DNA bound by 1 or 2 RuvA tetramers; 4 subunits per hexamer contact DNA at a time. Coordinated motions by a converter formed by DNA-disengaged RuvB subunits stimulates ATP hydrolysis and nucleotide exchange. Immobilization of the converter enables RuvB to convert the ATP-contained energy into a lever motion, pulling 2 nucleotides of DNA out of the RuvA tetramer per ATP hydrolyzed, thus driving DNA branch migration. The RuvB motors rotate together with the DNA substrate, which together with the progressing nucleotide cycle form the mechanistic basis for DNA recombination by continuous HJ branch migration. Branch migration allows RuvC to scan DNA until it finds its consensus sequence, where it cleaves and resolves cruciform DNA. In Bifidobacterium longum (strain DJO10A), this protein is Holliday junction branch migration complex subunit RuvB.